The primary structure comprises 72 residues: Translation initiation factor IF-1 (72 aa).

An S1-like domain is found at 1-72 (MSKEEVLEFS…TKGRITYRYK (72 aa)).

This sequence belongs to the IF-1 family. In terms of assembly, component of the 30S ribosomal translation pre-initiation complex which assembles on the 30S ribosome in the order IF-2 and IF-3, IF-1 and N-formylmethionyl-tRNA(fMet); mRNA recruitment can occur at any time during PIC assembly.

It localises to the cytoplasm. Functionally, one of the essential components for the initiation of protein synthesis. Stabilizes the binding of IF-2 and IF-3 on the 30S subunit to which N-formylmethionyl-tRNA(fMet) subsequently binds. Helps modulate mRNA selection, yielding the 30S pre-initiation complex (PIC). Upon addition of the 50S ribosomal subunit IF-1, IF-2 and IF-3 are released leaving the mature 70S translation initiation complex. This chain is Translation initiation factor IF-1, found in Bartonella quintana (strain Toulouse) (Rochalimaea quintana).